The chain runs to 296 residues: Glucokinase (296 aa).

The protein belongs to the ROK (NagC/XylR) family. Homodimer. A divalent metal cation is required as a cofactor.

It catalyses the reaction D-glucose + ATP = D-glucose 6-phosphate + ADP + H(+). Its function is as follows. Catalyzes the phosphorylation of D-glucose to D-glucose 6-phosphate using ATP as the phosphate donor. Has a broad hexose specificity, and in addition to glucose, which shows the highest catalytic efficiency, it can also phosphorylate fructose, mannose, galactose and sorbitol. Can also use CTP, GTP or UTP as phosphoryl donor. In Pyrobaculum calidifontis (strain DSM 21063 / JCM 11548 / VA1), this protein is Glucokinase.